A 376-amino-acid chain; its full sequence is Erythronate-4-phosphate dehydrogenase (376 aa).

Substrate-binding residues include serine 45 and threonine 66. NAD(+) contacts are provided by residues 126 to 127 (QV), aspartate 146, threonine 174, 201 to 203 (ASR), and aspartate 227. Arginine 203 is an active-site residue. Residue glutamate 232 is part of the active site. Catalysis depends on histidine 249, which acts as the Proton donor. Glycine 252 is an NAD(+) binding site. Tyrosine 253 is a binding site for substrate.

This sequence belongs to the D-isomer specific 2-hydroxyacid dehydrogenase family. PdxB subfamily. Homodimer.

Its subcellular location is the cytoplasm. The catalysed reaction is 4-phospho-D-erythronate + NAD(+) = (R)-3-hydroxy-2-oxo-4-phosphooxybutanoate + NADH + H(+). The protein operates within cofactor biosynthesis; pyridoxine 5'-phosphate biosynthesis; pyridoxine 5'-phosphate from D-erythrose 4-phosphate: step 2/5. Functionally, catalyzes the oxidation of erythronate-4-phosphate to 3-hydroxy-2-oxo-4-phosphonooxybutanoate. The protein is Erythronate-4-phosphate dehydrogenase of Ectopseudomonas mendocina (strain ymp) (Pseudomonas mendocina).